The following is a 247-amino-acid chain: L-cystine import ATP-binding protein TcyC (247 aa).

The region spanning 2–240 (LTVKGLNKSF…PKEERTQRFL (239 aa)) is the ABC transporter domain. 34-41 (GPSGSGKT) lines the ATP pocket.

Belongs to the ABC transporter superfamily. L-cystine importer (TC 3.A.1.3.14) family. In terms of assembly, the complex is composed of two ATP-binding proteins (TcyC), two transmembrane proteins (TcyB) and a solute-binding protein (TcyA).

It localises to the cell membrane. Functionally, part of the ABC transporter complex TcyABC involved in L-cystine import. Responsible for energy coupling to the transport system. In Bacillus subtilis (strain 168), this protein is L-cystine import ATP-binding protein TcyC (tcyC).